We begin with the raw amino-acid sequence, 430 residues long: MSNQDYKVADISLADWGRKEIKIAESEMPGLMETRREFAAQKPLKGARIAGCLHMTIQTAVLIETLQELGAEVRWSSCNIFSTQDQAAAAVAANGTPVFAWKGETEEEYWWCIEQTINGPDGWKPNMLLDDGGDLTAVIHEQYPDMMKDIYGVSEETTTGVHRLYEMSRKGELGMPAFNVNDSVTKSKFDNLYGCRESLVDSIKRATDVMIAGKVAVVAGFGDVGKGSAQSLRGLGAQVWVTEVDPICALQASMDGYKVVTMEEAAPVADIFVTATGNYNVITHDHMKAMKDEAIVCNIGHFDNEIDVASLKQYKWDEIKPQVDHVEFPDGKKITLLAEGRLVNLGCATGHPSFVMSNSFTNQVMAQMELYNNPGKYEKDVYVLPKHLDEKVAALHLGRVGANLTRLSEEQAGYIGVSVDGPFKPEWYRY.

Substrate is bound by residues threonine 56, aspartate 131, and glutamate 156. 157 to 159 (TTT) is an NAD(+) binding site. Residues lysine 186 and aspartate 190 each contribute to the substrate site. NAD(+) is bound by residues asparagine 191, 220-225 (GFGDVG), glutamate 243, asparagine 278, 299-301 (IGH), and asparagine 344.

The protein belongs to the adenosylhomocysteinase family. NAD(+) is required as a cofactor.

It is found in the cytoplasm. It carries out the reaction S-adenosyl-L-homocysteine + H2O = L-homocysteine + adenosine. Its pathway is amino-acid biosynthesis; L-homocysteine biosynthesis; L-homocysteine from S-adenosyl-L-homocysteine: step 1/1. In terms of biological role, may play a key role in the regulation of the intracellular concentration of adenosylhomocysteine. In Halorhodospira halophila (strain DSM 244 / SL1) (Ectothiorhodospira halophila (strain DSM 244 / SL1)), this protein is Adenosylhomocysteinase.